Here is a 341-residue protein sequence, read N- to C-terminus: Anthranilate phosphoribosyltransferase (341 aa).

5-phospho-alpha-D-ribose 1-diphosphate-binding positions include G79, G82–D83, T87, N89–T92, K107–S115, and S119. G79 is an anthranilate binding site. S91 contacts Mg(2+). Position 110 (N110) interacts with anthranilate. R165 contributes to the anthranilate binding site. D224 and E225 together coordinate Mg(2+).

The protein belongs to the anthranilate phosphoribosyltransferase family. As to quaternary structure, homodimer. The cofactor is Mg(2+).

The enzyme catalyses N-(5-phospho-beta-D-ribosyl)anthranilate + diphosphate = 5-phospho-alpha-D-ribose 1-diphosphate + anthranilate. Its pathway is amino-acid biosynthesis; L-tryptophan biosynthesis; L-tryptophan from chorismate: step 2/5. Its function is as follows. Catalyzes the transfer of the phosphoribosyl group of 5-phosphorylribose-1-pyrophosphate (PRPP) to anthranilate to yield N-(5'-phosphoribosyl)-anthranilate (PRA). The protein is Anthranilate phosphoribosyltransferase of Bacillus thuringiensis subsp. konkukian (strain 97-27).